A 218-amino-acid polypeptide reads, in one-letter code: MAINIILLGPPGAGKGTQARRLIDERGLVQLSTGDMLREARSSGTEMGKRVAEVMDRGELVTDEIVIGLIREKLGQGGKGFIFDGFPRTLAQADALQALMAEMDQRIDAVIEMRVDDAALVSRISGRFTCGNCGEVYHDVTKPTKEPGKCDVCGSTDLRRRADDNEESLKTRLMEYYKKTSPLIGYYYVKGNLNPVDGLAEIDEVAAQVAKVMDKIPA.

Residue 12–17 coordinates ATP; it reads GAGKGT. Residues 32–61 are NMP; it reads STGDMLREARSSGTEMGKRVAEVMDRGELV. Residues T33, R38, 59–61, 85–88, and Q92 contribute to the AMP site; these read ELV and GFPR. The segment at 126–164 is LID; the sequence is GRFTCGNCGEVYHDVTKPTKEPGKCDVCGSTDLRRRADD. R127 contributes to the ATP binding site. Residues C130 and C133 each coordinate Zn(2+). 136-137 lines the ATP pocket; that stretch reads VY. Zn(2+) is bound by residues C150 and C153. AMP contacts are provided by R161 and R172. A200 contacts ATP.

Belongs to the adenylate kinase family. In terms of assembly, monomer.

Its subcellular location is the cytoplasm. It catalyses the reaction AMP + ATP = 2 ADP. Its pathway is purine metabolism; AMP biosynthesis via salvage pathway; AMP from ADP: step 1/1. Catalyzes the reversible transfer of the terminal phosphate group between ATP and AMP. Plays an important role in cellular energy homeostasis and in adenine nucleotide metabolism. In Paracoccus denitrificans (strain Pd 1222), this protein is Adenylate kinase.